The chain runs to 313 residues: Cytochrome f (313 aa).

Positions 1-31 (MQNMFSFLSNKKIIALFLIIGTIFMPLSSEA) are cleaved as a signal peptide. Heme is bound by residues tyrosine 32, cysteine 52, cysteine 55, and histidine 56. The chain crosses the membrane as a helical span at residues 279–298 (IKWLIAFLILSTLGQVFLVL).

The protein belongs to the cytochrome f family. In terms of assembly, the 4 large subunits of the cytochrome b6-f complex are cytochrome b6, subunit IV (17 kDa polypeptide, petD), cytochrome f and the Rieske protein, while the 4 small subunits are PetG, PetL, PetM and PetN. The complex functions as a dimer. Requires heme as cofactor.

It localises to the plastid. It is found in the chloroplast thylakoid membrane. Its function is as follows. Component of the cytochrome b6-f complex, which mediates electron transfer between photosystem II (PSII) and photosystem I (PSI), cyclic electron flow around PSI, and state transitions. In Mesostigma viride (Green alga), this protein is Cytochrome f (petA).